The following is a 175-amino-acid chain: Protein GrpE (175 aa).

Belongs to the GrpE family. Homodimer.

It is found in the cytoplasm. In terms of biological role, participates actively in the response to hyperosmotic and heat shock by preventing the aggregation of stress-denatured proteins, in association with DnaK and GrpE. It is the nucleotide exchange factor for DnaK and may function as a thermosensor. Unfolded proteins bind initially to DnaJ; upon interaction with the DnaJ-bound protein, DnaK hydrolyzes its bound ATP, resulting in the formation of a stable complex. GrpE releases ADP from DnaK; ATP binding to DnaK triggers the release of the substrate protein, thus completing the reaction cycle. Several rounds of ATP-dependent interactions between DnaJ, DnaK and GrpE are required for fully efficient folding. The sequence is that of Protein GrpE from Thermoplasma acidophilum (strain ATCC 25905 / DSM 1728 / JCM 9062 / NBRC 15155 / AMRC-C165).